Consider the following 218-residue polypeptide: N-(5'-phosphoribosyl)anthranilate isomerase (218 aa).

Belongs to the TrpF family.

It catalyses the reaction N-(5-phospho-beta-D-ribosyl)anthranilate = 1-(2-carboxyphenylamino)-1-deoxy-D-ribulose 5-phosphate. It functions in the pathway amino-acid biosynthesis; L-tryptophan biosynthesis; L-tryptophan from chorismate: step 3/5. The polypeptide is N-(5'-phosphoribosyl)anthranilate isomerase (Rhodopseudomonas palustris (strain BisB5)).